Here is an 840-residue protein sequence, read N- to C-terminus: Cullin-4 (840 aa).

Positions 1–11 (MTSGAPPTIST) are enriched in polar residues. A disordered region spans residues 1–82 (MTSGAPPTIS…TGNSSRTTAT (82 aa)). A compositionally biased stretch (basic and acidic residues) spans 33-48 (TEAKQMRGDTENRSDG). A compositionally biased stretch (polar residues) spans 69-82 (FRSQTGNSSRTTAT). A Cullin neddylation domain is found at 772–831 (DRQYKIDAAVVRIMKARKQLNHQTLMTELLQQLRFPVSTADIKKRLESLIEREYISRDPE). Lysine 786 participates in a covalent cross-link: Glycyl lysine isopeptide (Lys-Gly) (interchain with G-Cter in NEDD8).

The protein belongs to the cullin family. Part of an E3 ubiquitin-protein ligase complex including cul-4 and ddb-1. In terms of processing, neddylated. Deneddylated via its interaction with the COP9 signalosome (CSN) complex.

It participates in protein modification; protein ubiquitination. Functionally, component of cullin-based E3 ubiquitin-protein ligase complexes which mediate the ubiquitination and subsequent proteasomal degradation of target proteins. The functional specificity of the E3 ubiquitin-protein ligase complex depends on the variable substrate recognition component. In association with ddb-1 directs ubiquitination of cdt-1 during S phase and is required for restraining DNA rereplication. Probably is involved in ubiquitination of cki-1. The protein is Cullin-4 (cul-4) of Caenorhabditis elegans.